We begin with the raw amino-acid sequence, 159 residues long: Large ribosomal subunit protein uL15 (159 aa).

Residues 1-13 are compositionally biased toward basic and acidic residues; the sequence is MRIHEVTPKEGST. Residues 1–51 are disordered; sequence MRIHEVTPKEGSTKRRRRVGRGISAGQGASCGFGMRGQKSRSGTGTKAGFE. Residues 23–35 are compositionally biased toward gly residues; sequence ISAGQGASCGFGM.

This sequence belongs to the universal ribosomal protein uL15 family. In terms of assembly, part of the 50S ribosomal subunit.

Its function is as follows. Binds to the 23S rRNA. This Rippkaea orientalis (strain PCC 8801 / RF-1) (Cyanothece sp. (strain PCC 8801)) protein is Large ribosomal subunit protein uL15.